The sequence spans 338 residues: m7GpppX diphosphatase (338 aa).

The segment at 1 to 36 (MADTAPQLKRKREQEAEEAETPSTEEKEAGVGNGTS) is disordered. A2 bears the N-acetylalanine mark. The nuclear localization signal (NLS) motif lies at 9–12 (KRKR). S23 and S100 each carry phosphoserine. N6-acetyllysine occurs at positions 137 and 141. The nuclear export sequence (NES) signature appears at 141 to 153 (KYMRQDLRLIRET). Residues W174, E184, D204, K206, and 267–278 (HYLPSYYHLHVH) contribute to the substrate site. The Histidine triad motif signature appears at 274 to 278 (HLHVH). The Nucleophile role is filled by H276.

It belongs to the HIT family. As to quaternary structure, homodimer. Associates with components of the exosome multienzyme ribonuclease complex, such as EXOSC3 and EXOSC4. Interacts with NDOR1.

It localises to the cytoplasm. The protein resides in the nucleus. It carries out the reaction a 5'-end (N(7)-methyl 5'-triphosphoguanosine)-ribonucleoside in mRNA + H2O = N(7)-methyl-GMP + a 5'-end diphospho-ribonucleoside in mRNA + 2 H(+). Its activity is regulated as follows. The hydrolytic product 7-methylguanosine diphosphate (m7GDP) efficiently inhibits the decapping scavenger activity and acts as a competitive inhibitor in vitro. Inhibited by 2,4-diaminoquinazoline. Its function is as follows. Decapping scavenger enzyme that catalyzes the cleavage of a residual cap structure following the degradation of mRNAs by the 3'-&gt;5' exosome-mediated mRNA decay pathway. Hydrolyzes cap analog structures like 7-methylguanosine nucleoside triphosphate (m7GpppG) with up to 10 nucleotide substrates (small capped oligoribonucleotides) and specifically releases 5'-phosphorylated RNA fragments and 7-methylguanosine monophosphate (m7GMP). Cleaves cap analog structures like tri-methyl guanosine nucleoside triphosphate (m3(2,2,7)GpppG) with very poor efficiency. Does not hydrolyze unmethylated cap analog (GpppG) and shows no decapping activity on intact m7GpppG-capped mRNA molecules longer than 25 nucleotides. Does not hydrolyze 7-methylguanosine diphosphate (m7GDP) to m7GMP. May also play a role in the 5'-&gt;3 mRNA decay pathway; m7GDP, the downstream product released by the 5'-&gt;3' mRNA mediated decapping activity, may be also converted by DCPS to m7GMP. Binds to m7GpppG and strongly to m7GDP. Plays a role in first intron splicing of pre-mRNAs. Inhibits activation-induced cell death. The protein is m7GpppX diphosphatase (Dcps) of Mus musculus (Mouse).